Reading from the N-terminus, the 337-residue chain is Ornithine carbamoyltransferase, catabolic (337 aa).

Residues 57 to 60, Gln-84, Arg-108, and 135 to 138 each bind carbamoyl phosphate; these read STRT and HPTQ. Residues Asn-167, Asp-231, and 235–236 contribute to the L-ornithine site; that span reads SM. Residues 272–273 and Arg-317 contribute to the carbamoyl phosphate site; that span reads CL.

Belongs to the aspartate/ornithine carbamoyltransferase superfamily. OTCase family.

Its subcellular location is the cytoplasm. It carries out the reaction carbamoyl phosphate + L-ornithine = L-citrulline + phosphate + H(+). It functions in the pathway amino-acid degradation; L-arginine degradation via ADI pathway; carbamoyl phosphate from L-arginine: step 2/2. Functionally, reversibly catalyzes the transfer of the carbamoyl group from carbamoyl phosphate (CP) to the N(epsilon) atom of ornithine (ORN) to produce L-citrulline. The chain is Ornithine carbamoyltransferase, catabolic from Streptococcus suis (strain 89/1591).